A 511-amino-acid chain; its full sequence is Voltage-gated potassium channel KCNC1 (511 aa).

At 1-190 the chain is on the cytoplasmic side; that stretch reads MGQGDESERI…EDPYSSRYAR (190 aa). The residue at position 44 (Ser-44) is a Phosphoserine. Residues His-77, Cys-83, Cys-104, and Cys-105 each coordinate Zn(2+). The segment at 121–147 is disordered; it reads SFGGAPLDNSADDADADGPGDSGDGED. Ser-130, Ser-142, Ser-158, and Ser-160 each carry phosphoserine. Positions 130 to 147 are enriched in acidic residues; the sequence is SADDADADGPGDSGDGED. A helical membrane pass occupies residues 191–209; sequence YVAFASLFFILVSITTFCL. Asn-220 and Asn-229 each carry an N-linked (GlcNAc...) asparagine glycan. The chain crosses the membrane as a helical span at residues 248–267; it reads IEGVCVVWFTFEFLMRVVFC. Over 268–276 the chain is Cytoplasmic; it reads PNKVEFIKN. A helical membrane pass occupies residues 277–295; that stretch reads SLNIIDFVAILPFYLEVGL. The chain crosses the membrane as a helical; Voltage-sensor span at residues 309 to 331; that stretch reads FLRVVRFVRILRIFKLTRHFVGL. Over 332–344 the chain is Cytoplasmic; that stretch reads RVLGHTLRASTNE. Residues 345-366 traverse the membrane as a helical segment; that stretch reads FLLLIIFLALGVLIFATMIYYA. K(+) contacts are provided by Thr-400, Leu-401, Gly-402, and Tyr-403. The short motif at 400 to 405 is the Selectivity filter element; sequence TLGYGD. Residues 415-436 traverse the membrane as a helical segment; that stretch reads LVGALCALAGVLTIAMPVPVIV. Over 437 to 511 the chain is Cytoplasmic; it reads NNFGMYYSLA…GRKPLRGMSI (75 aa). Ser-474 is subject to Phosphoserine. Thr-483 carries the phosphothreonine modification.

This sequence belongs to the potassium channel family. C (Shaw) (TC 1.A.1.2) subfamily. Kv3.1/KCNC1 sub-subfamily. In terms of assembly, homotetramer. Homomultimer. Heteromultimer with KCNG3, KCNG4 and KCNV2. Heteromultimer with KCNC2. Heterotetramer with KCNC3. Interacts with the ancillary subunits KCNE1 and KCNE2; the interaction modulates channel activity. In terms of processing, N-glycosylated; contains sialylated glycans. Detected in cerebellum. Detected in brain (at protein level). Detected in brain.

The protein resides in the cell membrane. The protein localises to the cell projection. It localises to the axon. It is found in the presynaptic cell membrane. The enzyme catalyses K(+)(in) = K(+)(out). Voltage-gated potassium channel that opens in response to the voltage difference across the membrane and through which potassium ions pass in accordance with their electrochemical gradient. The mechanism is time-dependent and inactivation is slow. Plays an important role in the rapid repolarization of fast-firing brain neurons. Can form functional homotetrameric channels and heterotetrameric channels that contain variable proportions of KCNC2, and possibly other family members as well. Contributes to fire sustained trains of very brief action potentials at high frequency in pallidal neurons. In Mus musculus (Mouse), this protein is Voltage-gated potassium channel KCNC1.